A 147-amino-acid polypeptide reads, in one-letter code: Large ribosomal subunit protein uL13 (147 aa).

The disordered stretch occupies residues 127 to 147 (GPEHPHSAQQPKVLEIQGAAR).

This sequence belongs to the universal ribosomal protein uL13 family. In terms of assembly, part of the 50S ribosomal subunit.

This protein is one of the early assembly proteins of the 50S ribosomal subunit, although it is not seen to bind rRNA by itself. It is important during the early stages of 50S assembly. The polypeptide is Large ribosomal subunit protein uL13 (Verminephrobacter eiseniae (strain EF01-2)).